A 142-amino-acid polypeptide reads, in one-letter code: Large ribosomal subunit protein uL13 (142 aa).

Belongs to the universal ribosomal protein uL13 family. In terms of assembly, part of the 50S ribosomal subunit.

Functionally, this protein is one of the early assembly proteins of the 50S ribosomal subunit, although it is not seen to bind rRNA by itself. It is important during the early stages of 50S assembly. The polypeptide is Large ribosomal subunit protein uL13 (Ralstonia nicotianae (strain ATCC BAA-1114 / GMI1000) (Ralstonia solanacearum)).